Consider the following 88-residue polypeptide: Small ribosomal subunit protein bS20 (88 aa).

Disordered regions lie at residues 1 to 25 (MPNI…KAVK) and 68 to 88 (HKNQ…SLAA).

The protein belongs to the bacterial ribosomal protein bS20 family.

Functionally, binds directly to 16S ribosomal RNA. This Cutibacterium acnes (strain DSM 16379 / KPA171202) (Propionibacterium acnes) protein is Small ribosomal subunit protein bS20.